Consider the following 282-residue polypeptide: V-set domain-containing T-cell activation inhibitor 1 (282 aa).

Positions 1–24 (MASLGQILFWSIISIIIILAGAIA) are cleaved as a signal peptide. Topologically, residues 25 to 259 (LIIGFGISGR…HLQLLNSKAS (235 aa)) are extracellular. Ig-like V-type domains lie at 35-146 (HSIT…LEYK) and 153-241 (PEVN…IKVT). Disulfide bonds link Cys-56-Cys-130 and Cys-168-Cys-225. An N-linked (GlcNAc...) asparagine glycan is attached at Asn-216. Residues 260–280 (LCVSSFFAISWALLPLSPYLM) traverse the membrane as a helical segment. The Cytoplasmic segment spans residues 281 to 282 (LK).

The protein belongs to the immunoglobulin superfamily. BTN/MOG family. N-glycosylated. As to expression, overexpressed in breast, ovarian, endometrial, renal cell (RCC) and non-small-cell lung cancers (NSCLC). Expressed on activated T- and B-cells, monocytes and dendritic cells, but not expressed in most normal tissues (at protein level). Widely expressed, including in kidney, liver, lung, ovary, placenta, spleen and testis.

The protein localises to the cell membrane. Negatively regulates T-cell-mediated immune response by inhibiting T-cell activation, proliferation, cytokine production and development of cytotoxicity. When expressed on the cell surface of tumor macrophages, plays an important role, together with regulatory T-cells (Treg), in the suppression of tumor-associated antigen-specific T-cell immunity. Involved in promoting epithelial cell transformation. This Homo sapiens (Human) protein is V-set domain-containing T-cell activation inhibitor 1.